The chain runs to 163 residues: Inner membrane protein YcdZ (163 aa).

The Cytoplasmic portion of the chain corresponds to 1 to 2 (MN). A helical membrane pass occupies residues 3-23 (ILLSIAITTGILSGIWGWVAV). Residue Ser-24 is a topological domain, periplasmic. A helical membrane pass occupies residues 25–45 (LGLLSWAGFLGCTAYFACPQG). Residues 46 to 48 (GLK) lie on the Cytoplasmic side of the membrane. Residues 49-69 (GLAISAATLLSGVVWAMVIIY) traverse the membrane as a helical segment. Over 70 to 71 (GS) the chain is Periplasmic. Residues 72 to 92 (ALAPHLEILGYVITGIVAFLM) form a helical membrane-spanning segment. The Cytoplasmic portion of the chain corresponds to 93 to 98 (CIQAKQ). The chain crosses the membrane as a helical span at residues 99–119 (LLLSFVPGTFIGACATFAGQG). The Periplasmic portion of the chain corresponds to 120–122 (DWK). A helical transmembrane segment spans residues 123–143 (LVLPSLALGLIFGYAMKNSGL). The Cytoplasmic segment spans residues 144–163 (WLAARSAKTAHREQEIKNKA).

This sequence to E.coli YahC.

The protein resides in the cell inner membrane. In Escherichia coli (strain K12), this protein is Inner membrane protein YcdZ (ycdZ).